A 483-amino-acid polypeptide reads, in one-letter code: Endoplasmic reticulum lectin 1 (483 aa).

The first 33 residues, 1 to 33 (MEEGDGGLRSLVPGGPLLLVLYGLLEASGGGRA), serve as a signal peptide directing secretion. MRH domains follow at residues 111 to 246 (SSCS…LCSH) and 342 to 469 (SYCF…ICKI). The cysteines at positions 113 and 126 are disulfide-linked. Asparagine 195 carries N-linked (GlcNAc...) asparagine glycosylation. Cystine bridges form between cysteine 199–cysteine 232, cysteine 215–cysteine 244, cysteine 344–cysteine 357, cysteine 421–cysteine 455, and cysteine 436–cysteine 467.

May form a complex with OS9, HSPA5, SYVN1, and SEL1L with which it interacts directly. Interacts (via PRKCSH 2 domain) with KREMEN2 (when glycosylated). Interacts with HSPA5. Post-translationally, N-glycosylated.

The protein localises to the endoplasmic reticulum lumen. Probable lectin that binds selectively to improperly folded lumenal proteins. May function in endoplasmic reticulum quality control and endoplasmic reticulum-associated degradation (ERAD) of both non-glycosylated proteins and glycoproteins. This Mus musculus (Mouse) protein is Endoplasmic reticulum lectin 1 (Erlec1).